The following is a 464-amino-acid chain: Argininosuccinate lyase (464 aa).

The protein belongs to the lyase 1 family. Argininosuccinate lyase subfamily.

The protein resides in the cytoplasm. It carries out the reaction 2-(N(omega)-L-arginino)succinate = fumarate + L-arginine. It participates in amino-acid biosynthesis; L-arginine biosynthesis; L-arginine from L-ornithine and carbamoyl phosphate: step 3/3. In Alcanivorax borkumensis (strain ATCC 700651 / DSM 11573 / NCIMB 13689 / SK2), this protein is Argininosuccinate lyase.